The following is a 442-amino-acid chain: Microfibrillar-associated protein 1 (442 aa).

Disordered stretches follow at residues 1 to 34 (MSAPSALVKQPPIQSTAGACPSRNEKGRAVYGEG) and 113 to 203 (EVVS…PRLK). 2 stretches are compositionally biased toward acidic residues: residues 134-148 (DTSEEEEEEIDDEEI) and 181-198 (ESELESEYEEYTDSEDEM).

It belongs to the MFAP1 family. In terms of assembly, component of the spliceosome B complex. Interacts with PRPF38A (via N-terminal interaction domain). As to expression, widely expressed.

The protein resides in the nucleus. Its function is as follows. Involved in pre-mRNA splicing as a component of the spliceosome. The polypeptide is Microfibrillar-associated protein 1 (Gallus gallus (Chicken)).